We begin with the raw amino-acid sequence, 1024 residues long: Beta-galactosidase (1024 aa).

Positions 103 and 202 each coordinate substrate. D202 lines the Na(+) pocket. 3 residues coordinate Mg(2+): E417, H419, and E462. Residues E462 and 538–541 contribute to the substrate site; that span reads EYAH. E462 functions as the Proton donor in the catalytic mechanism. The active-site Nucleophile is the E538. N598 serves as a coordination point for Mg(2+). The Na(+) site is built by F602 and N605. Substrate contacts are provided by N605 and W1000.

This sequence belongs to the glycosyl hydrolase 2 family. In terms of assembly, homotetramer. Mg(2+) is required as a cofactor. The cofactor is Na(+).

The catalysed reaction is Hydrolysis of terminal non-reducing beta-D-galactose residues in beta-D-galactosides.. The polypeptide is Beta-galactosidase (Escherichia coli O9:H4 (strain HS)).